The primary structure comprises 296 residues: Haloalkane dehalogenase (296 aa).

Positions 31-155 (PILFQHGNPT…QDRDLFQAFR (125 aa)) constitute an AB hydrolase-1 domain. The Nucleophile role is filled by Asp108. Catalysis depends on Glu132, which acts as the Proton donor. His272 serves as the catalytic Proton acceptor.

Belongs to the haloalkane dehalogenase family. Type 2 subfamily. Monomer.

Its subcellular location is the periplasm. It catalyses the reaction 1-haloalkane + H2O = a halide anion + a primary alcohol + H(+). The catalysed reaction is (3R,6R)-1,3,4,6-tetrachlorocyclohexa-1,4-diene + 2 H2O = 2,5-dichlorocyclohexa-2,5-dien-1,4-diol + 2 chloride + 2 H(+). The protein operates within xenobiotic degradation; gamma-hexachlorocyclohexane degradation. In terms of biological role, catalyzes hydrolytic cleavage of carbon-halogen bonds in halogenated aliphatic compounds, leading to the formation of the corresponding primary alcohols, halide ions and protons. Is involved in the degradation of the important environmental pollutant gamma-hexachlorocyclohexane (gamma-HCH or lindane) as it also catalyzes conversion of 1,3,4,6-tetrachloro-1,4-cyclohexadiene (1,4-TCDN) to 2,5-dichloro-2,5-cyclohexadiene-1,4-diol (2,5-DDOL) via the intermediate 2,4,5-trichloro-2,5-cyclohexadiene-1-ol (2,4,5-DNOL). The sequence is that of Haloalkane dehalogenase from Sphingobium indicum (strain DSM 16412 / CCM 7286 / MTCC 6364 / B90A).